The sequence spans 68 residues: Large ribosomal subunit protein bL32 (68 aa).

This sequence belongs to the bacterial ribosomal protein bL32 family.

This is Large ribosomal subunit protein bL32 from Orientia tsutsugamushi (strain Ikeda) (Rickettsia tsutsugamushi).